A 404-amino-acid polypeptide reads, in one-letter code: Inner membrane transport protein YdiM (404 aa).

Residues 1–5 lie on the Periplasmic side of the membrane; sequence MKNPY. Residues 6 to 26 form a helical membrane-spanning segment; that stretch reads FPTALGLYFNYLVHGMGVLLM. Over 27–43 the chain is Cytoplasmic; it reads SLNMASLETLWQTNAAG. Residues 44-64 form a helical membrane-spanning segment; sequence VSIVISSLGIGRLSVLLFAGL. The Periplasmic portion of the chain corresponds to 65–84; that stretch reads LSDRFGRRPFIMLGMCCYMA. A helical transmembrane segment spans residues 85 to 105; it reads FFFGILQTNNIIIAYVFGFLA. Residues 106–132 are Cytoplasmic-facing; the sequence is GMANSFLDAGTYPSLMEAFPRSPGTAN. The chain crosses the membrane as a helical span at residues 133–153; sequence ILIKAFVSSGQFLLPLIISLL. Over 154–157 the chain is Periplasmic; it reads VWAE. The chain crosses the membrane as a helical span at residues 158-178; sequence LWFGWSFMIAAGIMFINALFL. Over 179 to 206 the chain is Cytoplasmic; the sequence is YRCTFPPHPGRRLPVIKKTTSSTEHRCS. Residues 207–227 form a helical membrane-spanning segment; sequence IIDLASYTLYGYISMATFYLV. The Periplasmic segment spans residues 228-246; sequence SQWLAQYGQFVAGMSYTMS. The chain crosses the membrane as a helical span at residues 247–267; that stretch reads IKLLSIYTVGSLLCVFITAPL. Residues 268–273 are Cytoplasmic-facing; that stretch reads IRNTVR. A helical membrane pass occupies residues 274–294; the sequence is PTTLLMLYTFISFIALFTVCL. Residues 295–296 lie on the Periplasmic side of the membrane; that stretch reads HP. The chain crosses the membrane as a helical span at residues 297-317; it reads TFYVVIIFAFVIGFTSAGGVV. Over 318 to 336 the chain is Cytoplasmic; sequence QIGLTLMAERFPYAKGKAT. The chain crosses the membrane as a helical span at residues 337–357; that stretch reads GIYYSAGSIATFTIPLITAHL. Residues 358-364 are Periplasmic-facing; sequence SQRSIAD. The chain crosses the membrane as a helical span at residues 365–385; that stretch reads IMWFDTAIAAIGFLLALFIGL. The Cytoplasmic portion of the chain corresponds to 386 to 404; it reads RSRKKTRHHSLKENVAPGG.

This sequence belongs to the major facilitator superfamily.

The protein localises to the cell inner membrane. The protein is Inner membrane transport protein YdiM (ydiM) of Escherichia coli (strain K12).